A 155-amino-acid chain; its full sequence is Protein PtsT (155 aa).

This chain is Protein PtsT (ptsT), found in Geobacillus stearothermophilus (Bacillus stearothermophilus).